Consider the following 210-residue polypeptide: Dephospho-CoA kinase (210 aa).

The 199-residue stretch at 4-202 folds into the DPCK domain; that stretch reads WVGLTGGIGS…AFYSGIFASK (199 aa). 12–17 serves as a coordination point for ATP; that stretch reads GSGKSA.

The protein belongs to the CoaE family.

It localises to the cytoplasm. It carries out the reaction 3'-dephospho-CoA + ATP = ADP + CoA + H(+). Its pathway is cofactor biosynthesis; coenzyme A biosynthesis; CoA from (R)-pantothenate: step 5/5. Functionally, catalyzes the phosphorylation of the 3'-hydroxyl group of dephosphocoenzyme A to form coenzyme A. In Neisseria meningitidis serogroup A / serotype 4A (strain DSM 15465 / Z2491), this protein is Dephospho-CoA kinase.